The sequence spans 186 residues: Guanylate kinase (186 aa).

The region spanning 5–183 (GNLTVLTGPS…AFKEIEGFMG (179 aa)) is the Guanylate kinase-like domain. Position 12–19 (12–19 (GPSGVGKG)) interacts with ATP.

The protein belongs to the guanylate kinase family.

Its subcellular location is the cytoplasm. It carries out the reaction GMP + ATP = GDP + ADP. Functionally, essential for recycling GMP and indirectly, cGMP. The sequence is that of Guanylate kinase from Prochlorococcus marinus (strain NATL2A).